The chain runs to 160 residues: SUMO-conjugating enzyme SCE1 (160 aa).

N-acetylalanine is present on Ala-2. One can recognise a UBC core domain in the interval 5–158 (IARGRLAEER…VKLQSKQYPA (154 aa)). The active-site Glycyl thioester intermediate is the Cys-94.

It belongs to the ubiquitin-conjugating enzyme family. Interacts with SIZ1 (via PHD domain) and MMS21. Interacts with TCP14 and TCP15. Interacts with KIN10.

It participates in protein modification; protein sumoylation. Functionally, SUMO-conjugating enzyme that accepts the SUMO proteins from the E1 SUMO-activating heterodimer SAE1/SAE2 and catalyzes its covalent attachment to other proteins with the E3 SUMO ligases SIZ1 and MMS21. Associates with SIZ1 for sumoylation of the transcription factor GTE3. The chain is SUMO-conjugating enzyme SCE1 (SCE1) from Arabidopsis thaliana (Mouse-ear cress).